The sequence spans 83 residues: Greglin (83 aa).

A phosphoserine mark is found at serine 8, serine 11, and serine 15. Cystine bridges form between cysteine 21/cysteine 55, cysteine 25/cysteine 48, cysteine 33/cysteine 69, and cysteine 53/cysteine 76.

Serine protease inhibitor. Inhibits porcine pancreatic elastase with a Ki of 58.3 nM, human neutrophil elastase with a Ki of 3.6 nM, cathepsin G with a Ki of 153.5 nM, chymotrypsin with a Ki of 26.7 nM and subtilisin with a Ki of 0.68 nM. Does not inhibit neutrophil protease 3 or pancreatic trypsin. This chain is Greglin, found in Schistocerca gregaria (Desert locust).